Consider the following 194-residue polypeptide: Thymidylate kinase (194 aa).

7–14 (GVDGVGKS) contributes to the ATP binding site.

This sequence belongs to the thymidylate kinase family.

It catalyses the reaction dTMP + ATP = dTDP + ADP. Its function is as follows. Phosphorylation of dTMP to form dTDP in both de novo and salvage pathways of dTTP synthesis. The polypeptide is Thymidylate kinase (Campylobacter curvus (strain 525.92)).